The primary structure comprises 493 residues: Cytoplasmic tRNA 2-thiolation protein 2 (493 aa).

S489 is subject to Phosphoserine.

Belongs to the CTU2/NCS2 family. As to quaternary structure, interacts with NCS6 and URM1. May act by forming a heterodimer with NCS6.

The protein resides in the cytoplasm. The protein operates within tRNA modification; 5-methoxycarbonylmethyl-2-thiouridine-tRNA biosynthesis. Its function is as follows. Plays a central role in 2-thiolation of mcm(5)S(2)U at tRNA wobble positions of tRNA(Lys), tRNA(Glu) and tRNA(Gln). May act by forming a heterodimer with NCS6 that ligates sulfur from thiocarboxylated URM1 onto the uridine of tRNAs at wobble position. Prior mcm(5) tRNA modification by the elongator complex is required for 2-thiolation. May also be involved in protein urmylation. The chain is Cytoplasmic tRNA 2-thiolation protein 2 from Saccharomyces cerevisiae (strain RM11-1a) (Baker's yeast).